The primary structure comprises 218 residues: uncharacterized protein (218 aa).

Positions 1–24 (MAAQPQAPSAGGRPRAGKAVKSVA) are disordered. The 61-residue stretch at 28-88 (KLSRESIVEG…AVRIRVIDDI (61 aa)) folds into the HTH tetR-type domain. The segment at residues 51–70 (TINALATQLGTKGPSLYNHV) is a DNA-binding region (H-T-H motif). The residue at position 57 (Thr57) is a Phosphothreonine; by PknH.

Post-translationally, phosphorylated on Thr-57 by PknH.

This is an uncharacterized protein from Mycobacterium tuberculosis (strain ATCC 25618 / H37Rv).